A 110-amino-acid chain; its full sequence is Toxin HigB-2 (110 aa).

Toxic component of a type II toxin-antitoxin (TA) system. Inhibits translation by cleavage of mRNA. The chain is Toxin HigB-2 (higB-2) from Vibrio cholerae serotype O1 (strain ATCC 39315 / El Tor Inaba N16961).